Here is a 380-residue protein sequence, read N- to C-terminus: Cytochrome b (380 aa).

The next 4 helical transmembrane spans lie at Phe-34–Ala-54, Trp-78–Ile-99, Trp-114–Leu-134, and Phe-179–Thr-199. Residues His-84 and His-98 each coordinate heme b. His-183 and His-197 together coordinate heme b. His-202 is a binding site for a ubiquinone. Transmembrane regions (helical) follow at residues Leu-227–Ser-247, Leu-289–His-309, Phe-321–Ser-341, and Phe-348–Pro-368.

The protein belongs to the cytochrome b family. In terms of assembly, the cytochrome bc1 complex contains 11 subunits: 3 respiratory subunits (MT-CYB, CYC1 and UQCRFS1), 2 core proteins (UQCRC1 and UQCRC2) and 6 low-molecular weight proteins (UQCRH/QCR6, UQCRB/QCR7, UQCRQ/QCR8, UQCR10/QCR9, UQCR11/QCR10 and a cleavage product of UQCRFS1). This cytochrome bc1 complex then forms a dimer. The cofactor is heme b.

The protein resides in the mitochondrion inner membrane. Functionally, component of the ubiquinol-cytochrome c reductase complex (complex III or cytochrome b-c1 complex) that is part of the mitochondrial respiratory chain. The b-c1 complex mediates electron transfer from ubiquinol to cytochrome c. Contributes to the generation of a proton gradient across the mitochondrial membrane that is then used for ATP synthesis. In Antigone vipio (White-naped crane), this protein is Cytochrome b (MT-CYB).